Reading from the N-terminus, the 443-residue chain is MNTQLNEIWQKTLGLLKNELTEISFNTWIKTIDPLSLTGNTINLAVPAEFNKGILESRYQTLIKNAIKQVTFKEYEIAFIVPSQENLNKLTKQTESAGNEDSPLSVLNPKYTFDTFVIGNSNRFAHAAALAVAEAPGKAYNPLFIYGGVGLGKTHLMHAIGHYILEQNSSQKVLYVSSEKFTNELINAIKDNRNEEFRSKYRNIDVLLIDDIQFIAGKERTEEEFFHTFNALYEANKQIILSSDKPPKEISLEDRLRSRFEWGLIADMQAPDLETRIAILRKKAQLENLTVPNEVIVFIADKIASNIRELEGALNRVIAYSSLTENEITVELASEALKDILSANKAKVLNCTTIQEAVARYFDIRPEEFKSKKRTRDIAFPRQIAMYLCRELTEMSLPKIGEEFGGRDHTTVIHACEKISEEIESNSETRRAVSEIKRNLLGK.

The tract at residues 1–75 (MNTQLNEIWQ…AIKQVTFKEY (75 aa)) is domain I, interacts with DnaA modulators. The domain II stretch occupies residues 75-105 (YEIAFIVPSQENLNKLTKQTESAGNEDSPLS). The segment at 106–321 (VLNPKYTFDT…GALNRVIAYS (216 aa)) is domain III, AAA+ region. ATP contacts are provided by Gly-150, Gly-152, Lys-153, and Thr-154. The tract at residues 322–443 (SLTENEITVE…SEIKRNLLGK (122 aa)) is domain IV, binds dsDNA.

It belongs to the DnaA family. In terms of assembly, oligomerizes as a right-handed, spiral filament on DNA at oriC.

The protein resides in the cytoplasm. Plays an essential role in the initiation and regulation of chromosomal replication. ATP-DnaA binds to the origin of replication (oriC) to initiate formation of the DNA replication initiation complex once per cell cycle. Binds the DnaA box (a 9 base pair repeat at the origin) and separates the double-stranded (ds)DNA. Forms a right-handed helical filament on oriC DNA; dsDNA binds to the exterior of the filament while single-stranded (ss)DNA is stabiized in the filament's interior. The ATP-DnaA-oriC complex binds and stabilizes one strand of the AT-rich DNA unwinding element (DUE), permitting loading of DNA polymerase. After initiation quickly degrades to an ADP-DnaA complex that is not apt for DNA replication. Binds acidic phospholipids. The polypeptide is Chromosomal replication initiator protein DnaA (Acetivibrio thermocellus (strain ATCC 27405 / DSM 1237 / JCM 9322 / NBRC 103400 / NCIMB 10682 / NRRL B-4536 / VPI 7372) (Clostridium thermocellum)).